The following is a 152-amino-acid chain: Superoxide dismutase [Cu-Zn] 2 (152 aa).

3 residues coordinate Cu cation: His45, His47, and His62. A disulfide bridge connects residues Cys56 and Cys145. Residues His62, His70, His79, and Asp82 each contribute to the Zn(2+) site. His119 provides a ligand contact to Cu cation.

This sequence belongs to the Cu-Zn superoxide dismutase family. Homodimer. The cofactor is Cu cation. Zn(2+) serves as cofactor.

It is found in the cytoplasm. It carries out the reaction 2 superoxide + 2 H(+) = H2O2 + O2. In terms of biological role, destroys radicals which are normally produced within the cells and which are toxic to biological systems. In Solanum lycopersicum (Tomato), this protein is Superoxide dismutase [Cu-Zn] 2 (SODCC.5).